Consider the following 290-residue polypeptide: Carbonic anhydrase-related protein (290 aa).

The segment at M1–G26 is disordered. S5 bears the Phosphoserine mark. Acidic residues predominate over residues K16 to G26. An Alpha-carbonic anhydrase domain is found at V27–F289. H87 serves as the catalytic Proton donor/acceptor. 2 residues coordinate Zn(2+): H118 and H141.

Belongs to the alpha-carbonic anhydrase family.

Its function is as follows. Does not have a carbonic anhydrase catalytic activity. In Homo sapiens (Human), this protein is Carbonic anhydrase-related protein (CA8).